Reading from the N-terminus, the 380-residue chain is Chaperone protein DnaJ (380 aa).

Positions 5 to 70 constitute a J domain; the sequence is DYYEVLGVER…SKRAAYDQYG (66 aa). The CR-type zinc-finger motif lies at 139 to 217; the sequence is GTNVNIRVPT…CHGEGRVEES (79 aa). C152, C155, C169, C172, C191, C194, C205, and C208 together coordinate Zn(2+). CXXCXGXG motif repeat units follow at residues 152–159, 169–176, 191–198, and 205–212; these read CKPCDGSG, CPTCGGIG, CPRCHGHG, and CDSCHGEG. A disordered region spans residues 224 to 245; sequence VPPGVDTGDRIRLSGEGEAGTQ.

This sequence belongs to the DnaJ family. Homodimer. The cofactor is Zn(2+).

It localises to the cytoplasm. Participates actively in the response to hyperosmotic and heat shock by preventing the aggregation of stress-denatured proteins and by disaggregating proteins, also in an autonomous, DnaK-independent fashion. Unfolded proteins bind initially to DnaJ; upon interaction with the DnaJ-bound protein, DnaK hydrolyzes its bound ATP, resulting in the formation of a stable complex. GrpE releases ADP from DnaK; ATP binding to DnaK triggers the release of the substrate protein, thus completing the reaction cycle. Several rounds of ATP-dependent interactions between DnaJ, DnaK and GrpE are required for fully efficient folding. Also involved, together with DnaK and GrpE, in the DNA replication of plasmids through activation of initiation proteins. In Pseudomonas syringae pv. syringae (strain B728a), this protein is Chaperone protein DnaJ.